The chain runs to 1463 residues: Collagen alpha-1(I) chain (1463 aa).

The N-terminal stretch at 1–22 (MFSFVDLRLLLLLAATALLTHG) is a signal peptide. Residues 23–161 (QEEGQEEGQE…PPGLGGNFAP (139 aa)) constitute a propeptide, N-terminal propeptide. One can recognise a VWFC domain in the interval 38 to 96 (VTCVQNGLRYHDRDVWKPVPCQICVCDNGNVLCDDVICDELKDCPNAKVPTDECCPVCP). The disordered stretch occupies residues 98–1217 (GQESPTDQET…AHDGGRYYRA (1120 aa)). Residues 138–153 (PGLPGPPGPPGPPGPP) are compositionally biased toward pro residues. Residue Gln-162 is modified to Pyrrolidone carboxylic acid. The nonhelical region (N-terminal) stretch occupies residues 162 to 177 (QLSYGYDEKSTGISVP). At Lys-170 the chain carries Allysine. Phosphoserine is present on Ser-171. The interval 178–1191 (GPMGPSGPRG…PGPPGPPGPP (1014 aa)) is triple-helical region. 11 positions are modified to 4-hydroxyproline: Pro-189, Pro-192, Pro-195, Pro-204, Pro-207, Pro-210, Pro-225, Pro-240, Pro-246, Pro-255, and Pro-261. A compositionally biased stretch (low complexity) spans 197–216 (PQGFQGPPGEPGEPGASGPM). Basic and acidic residues predominate over residues 228–242 (NGDDGEAGKPGRPGE). Residue Lys-264 is modified to 5-hydroxylysine; alternate. The O-linked (Gal...) hydroxylysine; alternate glycan is linked to Lys-264. Ser-270 is modified (phosphoserine). A 5-hydroxylysine mark is found at Lys-276 and Lys-285. A compositionally biased stretch (low complexity) spans 278-294 (DAGPAGPKGEPGSPGEN). 4-hydroxyproline is present on residues Pro-288, Pro-291, Pro-297, Pro-306, and Pro-312. A compositionally biased stretch (low complexity) spans 317–330 (PAGARGNDGATGAA). Residues 332 to 344 (PPGPTGPAGPPGF) are compositionally biased toward pro residues. 3 positions are modified to 4-hydroxyproline: Pro-333, Pro-342, and Pro-345. Residues 349 to 358 (GAKGEGGPQG) are compositionally biased toward gly residues. A 4-hydroxyproline mark is found at Pro-372, Pro-375, Pro-387, Pro-393, Pro-402, Pro-408, Pro-411, and Pro-426. Residues 378 to 417 (AGAAGPAGNPGADGQPGAKGANGAPGIAGAPGFPGARGPS) show a composition bias toward low complexity. A 5-hydroxylysine modification is found at Lys-429. A 4-hydroxyproline mark is found at Pro-435, Pro-438, Pro-450, Pro-459, Pro-474, Pro-480, Pro-489, and Pro-495. Over residues 484 to 493 (GERGGPGSRG) the composition is skewed to gly residues. The span at 494-525 (FPGADGVAGPKGPAGERGAPGPAGPKGSPGEA) shows a compositional bias: low complexity. Lys-504 carries the 5-hydroxylysine modification. 4-hydroxyproline occurs at positions 513, 522, 528, 534, 543, 546, 555, 564, 570, 582, 591, 600, 603, 621, 639, 645, 651, 657, 663, 669, 681, 690, 702, 714, 717, 723, 729, and 738. Over residues 537–563 (KGLTGSPGSPGPDGKTGPPGPAGQDGR) the composition is skewed to low complexity. The segment covering 572-591 (ARGQAGVMGFPGPKGAAGEP) has biased composition (low complexity). Low complexity predominate over residues 633–660 (QGPAGSPGFQGLPGPAGPPGEAGKPGEQ). Over residues 695 to 723 (PRGANGAPGNDGAKGDAGAPGAPGSQGAP) the composition is skewed to low complexity. The short motif at 744–746 (RGD) is the Cell attachment site element. Lys-750 carries the 5-hydroxylysine modification. 4-hydroxyproline occurs at positions 756, 771, and 777. Positions 783-797 (AGPSGPAGPTGARGA) are enriched in low complexity. Ser-786 bears the Phosphoserine mark. 4-hydroxyproline is present on residues Pro-798, Pro-804, Pro-807, Pro-816, Pro-822, Pro-840, Pro-849, and Pro-858. The span at 810–837 (AGFAGPPGADGQPGAKGEPGDAGAKGDA) shows a compositional bias: low complexity. A compositionally biased stretch (pro residues) spans 839–851 (PPGPAGPAGPPGP). Positions 852–882 (IGNVGAPGPKGARGSAGPPGATGFPGAAGRV) are enriched in low complexity. The residue at position 861 (Lys-861) is a 5-hydroxylysine. Residues Pro-870 and Pro-876 each carry the 4-hydroxyproline modification. Pro-884 is subject to 3-hydroxyproline. 16 positions are modified to 4-hydroxyproline: Pro-885, Pro-894, Pro-897, Pro-918, Pro-927, Pro-936, Pro-945, Pro-963, Pro-972, Pro-975, Pro-981, Pro-996, Pro-1002, Pro-1008, Pro-1017, and Pro-1023. Residues 930-954 (AGEKGAPGADGPAGAPGTPGPQGIA) show a composition bias toward low complexity. The segment covering 995–1005 (PPGPMGPPGLA) has biased composition (pro residues). At Lys-1032 the chain carries 5-hydroxylysine. Residues 1041-1056 (AGPPGAPGAPGAPGPV) show a composition bias toward pro residues. 4-hydroxyproline occurs at positions 1044, 1047, and 1050. Low complexity predominate over residues 1077-1091 (IGPVGARGPAGPQGP). A Cell attachment site motif is present at residues 1092–1094 (RGD). Basic and acidic residues predominate over residues 1092 to 1106 (RGDKGETGEQGDRGI). Lys-1095 carries the post-translational modification 5-hydroxylysine. The residue at position 1107 (Lys-1107) is a 5-hydroxylysine; alternate. An O-linked (Gal...) hydroxylysine; alternate glycan is attached at Lys-1107. Pro-1119, Pro-1122, Pro-1125, Pro-1143, and Pro-1158 each carry 4-hydroxyproline. Positions 1125 to 1149 (PGEQGPSGASGPAGPRGPPGSAGSP) are enriched in low complexity. Pro-1163 carries the post-translational modification 3-hydroxyproline. Pro-1164 bears the 4-hydroxyproline mark. Over residues 1176–1191 (AGPPGPPGPPGPPGPP) the composition is skewed to pro residues. The residue at position 1178 (Pro-1178) is a 3-hydroxyproline. Pro-1179 bears the 4-hydroxyproline mark. Pro-1181 carries the post-translational modification 3-hydroxyproline. A 4-hydroxyproline modification is found at Pro-1182. Pro-1184 carries the 3-hydroxyproline modification. A 4-hydroxyproline mark is found at Pro-1185, Pro-1188, and Pro-1191. The segment at 1192-1215 (SGGYDLSFLPQPPQEKAHDGGRYY) is nonhelical region (C-terminal). Basic and acidic residues predominate over residues 1206 to 1217 (EKAHDGGRYYRA). Position 1207 is an allysine (Lys-1207). Residues 1218–1463 (DDANVVRDRD…GFDVGPACFL (246 aa)) constitute a propeptide, C-terminal propeptide. The Fibrillar collagen NC1 domain occupies 1228 to 1463 (LEVDTTLKSL…GFDVGPACFL (236 aa)). 3 cysteine pairs are disulfide-bonded: Cys-1258–Cys-1290, Cys-1298–Cys-1461, and Cys-1369–Cys-1414. Positions 1276, 1278, 1279, 1281, and 1284 each coordinate Ca(2+).

The protein belongs to the fibrillar collagen family. As to quaternary structure, trimers of one alpha 2(I) and two alpha 1(I) chains. Interacts with MRC2. Interacts with TRAM2. Interacts with MFAP4 in a Ca (2+)-dependent manner. Post-translationally, contains mostly 4-hydroxyproline. Proline residues at the third position of the tripeptide repeating unit (G-X-Y) are hydroxylated in some or all of the chains. Contains 3-hydroxyproline at a few sites. This modification occurs on the first proline residue in the sequence motif Gly-Pro-Hyp, where Hyp is 4-hydroxyproline. In terms of processing, lysine residues at the third position of the tripeptide repeating unit (G-X-Y) are 5-hydroxylated in some or all of the chains. Post-translationally, O-glycosylated on hydroxylated lysine residues. The O-linked glycan consists of a Glc-Gal disaccharide. Forms the fibrils of tendon, ligaments and bones. In bones the fibrils are mineralized with calcium hydroxyapatite.

The protein resides in the secreted. It localises to the extracellular space. It is found in the extracellular matrix. Functionally, type I collagen is a member of group I collagen (fibrillar forming collagen). The sequence is that of Collagen alpha-1(I) chain (COL1A1) from Bos taurus (Bovine).